Consider the following 188-residue polypeptide: Pro-adrenomedullin (188 aa).

An N-terminal signal peptide occupies residues 1–21 (MKLVPVALLYLGSLAFLGVDT). At R41 the chain carries Arginine amide. A propeptide spanning residues 45–92 (ELRESSSYPTGLADVKAGPVQTLIRPQDVKGASRSPQASSPDAARIRV) is cleaved from the precursor. A disordered region spans residues 69–89 (RPQDVKGASRSPQASSPDAAR). A disulfide bond links C110 and C115. Residues 129-175 (DKDKDGSAPRSKISPQGYGRRRRRSLPEAGLGRTLLQPPEPKLRGAP) form a disordered region. Y146 carries the tyrosine amide modification. A propeptide spans 153-188 (SLPEAGLGRTLLQPPEPKLRGAPDSRVHQVLATLRI) (preproAM C-terminal fragment).

This sequence belongs to the adrenomedullin family.

It localises to the secreted. Functionally, adrenomedullin/ADM and proadrenomedullin N-20 terminal peptide/PAMP are peptide hormones that act as potent hypotensive and vasodilatator agents. Numerous actions have been reported most related to the physiologic control of fluid and electrolyte homeostasis. ADM function is mediated by the CALCRL-RAMP2 and CALCRL-RAMP3 receptor complexes with ADM showing the highest potency for the CALCRL-RAMP2 complex. This Bos taurus (Bovine) protein is Pro-adrenomedullin (ADM).